The primary structure comprises 460 residues: Decaprenylphosphoryl-beta-D-ribose oxidase (460 aa).

The FAD-binding PCMH-type domain maps to 19 to 193 (TAPTVASVLS…LRATIEMTPT (175 aa)). FAD contacts are provided by residues 52–62 (ARGLGRSYGDN), Gly-116, 121–124 (TVGG), 128–131 (CDIH), Ile-183, and Tyr-414.

The protein belongs to the DprE1 family. In terms of assembly, monomer. Interacts with DprE2 to form an epimerase complex.

The protein resides in the periplasm. The catalysed reaction is trans,octa-cis-decaprenylphospho-beta-D-ribofuranose + FAD + H(+) = trans,octa-cis-decaprenylphospho-beta-D-erythro-pentofuranosid-2-ulose + FADH2. It participates in cell wall biogenesis; cell wall polysaccharide biosynthesis. With respect to regulation, is inhibited by 8-nitro-benzothiazinones (BTZs) such as BTZ043; BTZs are a new class of antimycobacterial agents that block formation of both cell-wall lipoarabinomannan and arabinogalactan via inhibition of decaprenyl-phospho-arabinose (DPA) synthesis. BTZs are suicide inhibitors that act via covalent modification of DprE1; the essential nitro group of these compounds is reduced by DprE1 to a nitroso group, which then specifically reacts with Cys-386 of DprE1 to form an irreversible semimercaptal adduct. Other compounds with diverse scaffolds (dinitrobenzamides and nitrobenzoquinoxalines) also act as covalent DprE1 inhibitors. Functionally, component of the DprE1-DprE2 complex that catalyzes the 2-step epimerization of decaprenyl-phospho-ribose (DPR) to decaprenyl-phospho-arabinose (DPA), a key precursor that serves as the arabinose donor required for the synthesis of cell-wall arabinans. DprE1 catalyzes the first step of epimerization, namely FAD-dependent oxidation of the C2' hydroxyl of DPR to yield the keto intermediate decaprenyl-phospho-2'-keto-D-arabinose (DPX). The intermediate DPX is then transferred to DprE2 subunit of the epimerase complex, most probably through a 'substrate channel' at the interface of DprE1-DprE2 complex. Can also use farnesyl-phosphoryl-beta-D-ribofuranose (FPR) as substrate in vitro. Appears to be essential for the growth of M.smegmatis. This Mycolicibacterium smegmatis (strain ATCC 700084 / mc(2)155) (Mycobacterium smegmatis) protein is Decaprenylphosphoryl-beta-D-ribose oxidase.